Here is a 952-residue protein sequence, read N- to C-terminus: MATPSMMPQWSYMHISGQDASEYLSPGLVQFARATETYFSLNNKFRNPTVAPTHDVTTDRSQRLTLRFIPVDREDTAYSYKARFTLAVGDNRVLDMASTYFDIRGVLDRGPTFKPYSGTAYNALAPKGAPNPCEWDEAATALEINLEEEDDDNEDEVDEQAEQQKTHVFGQAPYSGINITKEGIQIGVEGQTPKYADKTFQPEPQIGESQWYETEINHAAGRVLKKTTPMKPCYGSYAKPTNENGGQGILVKQQNGKLESQVEMQFFSTTEATAGNGDNLTPKVVLYSEDVDIETPDTHISYMPTIKEGNSRELMGQQSMPNRPNYIAFRDNFIGLMYYNSTGNMGVLAGQASQLNAVVDLQDRNTELSYQLLLDSIGDRTRYFSMWNQAVDSYDPDVRIIENHGTEDELPNYCFPLGGVINTETLTKVKPKTGQENGWEKDATEFSDKNEIRVGNNFAMEINLNANLWRNFLYSNIALYLPDKLKYSPSNVKISDNPNTYDYMNKRVVAPGLVDCYINLGARWSLDYMDNVNPFNHHRNAGLRYRSMLLGNGRYVPFHIQVPQKFFAIKNLLLLPGSYTYEWNFRKDVNMVLQSSLGNDLRVDGASIKFDSICLYATFFPMAHNTASTLEAMLRNDTNDQSFNDYLSAANMLYPIPANATNVPISIPSRNWAAFRGWAFTRLKTKETPSLGSGYDPYYTYSGSIPYLDGTFYLNHTFKKVAITFDSSVSWPGNDRLLTPNEFEIKRSVDGEGYNVAQCNMTKDWFLVQMLANYNIGYQGFYIPESYKDRMYSFFRNFQPMSRQVVDDTKYKDYQQVGILHQHNNSGFVGYLAPTMREGQAYPANFPYPLIGKTAVDSITQKKFLCDRTLWRIPFSSNFMSMGALTDLGQNLLYANSAHALDMTFEVDPMDEPTLLYVLFEVFDVVRVHRPHRGVIETVYLRTPFSAGNATT.

At A2 the chain carries N-acetylalanine; by host. Residues 149–161 (EDDDNEDEVDEQA) show a composition bias toward acidic residues. The segment at 149-172 (EDDDNEDEVDEQAEQQKTHVFGQA) is disordered. A Phosphoserine; by host modification is found at S175. Y940 carries the post-translational modification Phosphotyrosine; by host.

This sequence belongs to the adenoviridae hexon protein family. As to quaternary structure, homotrimer. Interacts with the capsid vertex protein; this interaction binds the peripentonal hexons to the neighboring penton base. Interacts with the hexon-linking protein; this interaction tethers the hexons surrounding the penton to those situated in the central plate of the facet. Interacts with the hexon-interlacing protein; this interaction lashes the hexons together. Interacts with host dyneins DYNC1LI1 and DYNC1I2; this interaction might be involved in intracellular microtubule-dependent transport of incoming viral capsid. Interacts with the shutoff protein; this interaction allows folding and formation of hexons trimers. Interacts with pre-protein VI; this interaction probably allows nuclear import of hexon trimers and possibly pre-capsid assembly. Interacts with host NUP214 (via N-terminus); this interaction might be essential for the release of the virus genome to the nucleus.

It localises to the virion. The protein resides in the host nucleus. Its function is as follows. Major capsid protein that self-associates to form 240 hexon trimers, each in the shape of a hexagon, building most of the pseudo T=25 capsid. Assembled into trimeric units with the help of the chaperone shutoff protein. Transported by pre-protein VI to the nucleus where it associates with other structural proteins to form an empty capsid. Might be involved, through its interaction with host dyneins, in the intracellular microtubule-dependent transport of incoming viral capsid to the nucleus. In Homo sapiens (Human), this protein is Hexon protein.